The chain runs to 21 residues: MPDPAKTAPKKGSKKAVTKXA.

The disordered stretch occupies residues 1-21 (MPDPAKTAPKKGSKKAVTKXA). An N6-acetyllysine mark is found at Lys6 and Lys11. Positions 8-21 (APKKGSKKAVTKXA) are enriched in basic residues. Ser13 carries the phosphoserine modification. Residues Lys14 and Lys19 each carry the N6-acetyllysine modification. Lys19 is covalently cross-linked (Glycyl lysine isopeptide (Lys-Gly) (interchain with G-Cter in ubiquitin)).

Belongs to the histone H2B family. In terms of assembly, the nucleosome is a histone octamer containing two molecules each of H2A, H2B, H3 and H4 assembled in one H3-H4 heterotetramer and two H2A-H2B heterodimers. The octamer wraps approximately 147 bp of DNA. Post-translationally, monoubiquitination at the C-terminal Lys gives a specific tag for epigenetic transcriptional activation and is also prerequisite for histone H3 'Lys-4' and 'Lys-79' methylation. In terms of processing, phosphorylated during apoptosis; which facilitates apoptotic chromatin condensation.

The protein resides in the nucleus. It localises to the chromosome. Core component of nucleosome. Nucleosomes wrap and compact DNA into chromatin, limiting DNA accessibility to the cellular machineries which require DNA as a template. Histones thereby play a central role in transcription regulation, DNA repair, DNA replication and chromosomal stability. DNA accessibility is regulated via a complex set of post-translational modifications of histones, also called histone code, and nucleosome remodeling. Functionally, has broad-spectrum antimicrobial and antibacterial activity. It is important in the antimicrobial defenses of fish skin and possesses strong activity against saprolegnia, the most common fungal infection in fish. It is also inhibitory to fish bacterial pathogens, such as aeromonas hydrophila, vibrio alginolyticus and E.coli D31. The sequence is that of Histone H2B 1 from Ictalurus punctatus (Channel catfish).